Here is a 511-residue protein sequence, read N- to C-terminus: Mesoderm induction early response protein 1 (511 aa).

Over residues 1–16 (MAEPSVESSSPGGSAT) the composition is skewed to low complexity. The disordered stretch occupies residues 1–171 (MAEPSVESSS…EEESEEDEDY (171 aa)). At S10 the chain carries Phosphoserine. Positions 17 to 36 (SEDHEFDPSADMLVHDFDDE) are enriched in basic and acidic residues. Over residues 37–46 (RTLEEEEMME) the composition is skewed to acidic residues. Over residues 57-66 (DLAREGDMPI) the composition is skewed to basic and acidic residues. The segment covering 83-104 (EEEEEEEEEEEGEDDEDADNDD) has biased composition (acidic residues). Positions 128–143 (QSSNDDPSQSVTSQDA) are enriched in polar residues. A Phosphoserine modification is found at S140. Y154 bears the Phosphotyrosine mark. 2 positions are modified to phosphoserine: S159 and S165. Residues 159–171 (SEIEEESEEDEDY) are compositionally biased toward acidic residues. The region spanning 179 to 277 (KEIMVGSMFQ…EALRRLRFNV (99 aa)) is the ELM2 domain. A Glycyl lysine isopeptide (Lys-Gly) (interchain with G-Cter in SUMO2) cross-link involves residue K238. Residues 282–334 (EELSVWTEEECRNFEQGLKAYGKDFHLIQANKVRTRSVGECVAFYYMWKKSER) enclose the SANT domain. The tract at residues 365–511 (ESESAASSRA…KFEEHENTND (147 aa)) is disordered. S366, S368, and S376 each carry phosphoserine. Over residues 397 to 408 (SSRNQNGVSSNG) the composition is skewed to polar residues. 2 stretches are compositionally biased toward basic and acidic residues: residues 413-422 (LNKEEVKVEG) and 461-474 (ARNE…NERP). Residue K419 forms a Glycyl lysine isopeptide (Lys-Gly) (interchain with G-Cter in SUMO2) linkage. A compositionally biased stretch (polar residues) spans 481–493 (NSSGKESPGSSEF). A phosphoserine mark is found at S482, S487, and S490. A compositionally biased stretch (basic and acidic residues) spans 499-511 (SHGKFEEHENTND).

In terms of assembly, interacts with HDAC1. Part of a complex containing at least CDYL, MIER1, MIER2, HDAC1 and HDAC2. In terms of tissue distribution, ubiquitously expressed. Isoform 1 is only expressed in testis.

It is found in the nucleus. Transcriptional repressor regulating the expression of a number of genes including SP1 target genes. Probably functions through recruitment of HDAC1 a histone deacetylase involved in chromatin silencing. This is Mesoderm induction early response protein 1 (Mier1) from Mus musculus (Mouse).